Here is a 336-residue protein sequence, read N- to C-terminus: Ketol-acid reductoisomerase (NADP(+)) (336 aa).

Residues 2 to 182 (AKIYYQQDCN…GGARAGVLET (181 aa)) enclose the KARI N-terminal Rossmann domain. NADP(+) contacts are provided by residues 25 to 28 (YGSQ), serine 51, serine 53, and 83 to 86 (DEKQ). Histidine 108 is an active-site residue. Residue glycine 134 participates in NADP(+) binding. The KARI C-terminal knotted domain maps to 183–328 (TFREETETDL…AELRGLMSWT (146 aa)). 4 residues coordinate Mg(2+): aspartate 191, glutamate 195, glutamate 227, and glutamate 231. Serine 252 lines the substrate pocket.

This sequence belongs to the ketol-acid reductoisomerase family. It depends on Mg(2+) as a cofactor.

The enzyme catalyses (2R)-2,3-dihydroxy-3-methylbutanoate + NADP(+) = (2S)-2-acetolactate + NADPH + H(+). The catalysed reaction is (2R,3R)-2,3-dihydroxy-3-methylpentanoate + NADP(+) = (S)-2-ethyl-2-hydroxy-3-oxobutanoate + NADPH + H(+). It participates in amino-acid biosynthesis; L-isoleucine biosynthesis; L-isoleucine from 2-oxobutanoate: step 2/4. The protein operates within amino-acid biosynthesis; L-valine biosynthesis; L-valine from pyruvate: step 2/4. In terms of biological role, involved in the biosynthesis of branched-chain amino acids (BCAA). Catalyzes an alkyl-migration followed by a ketol-acid reduction of (S)-2-acetolactate (S2AL) to yield (R)-2,3-dihydroxy-isovalerate. In the isomerase reaction, S2AL is rearranged via a Mg-dependent methyl migration to produce 3-hydroxy-3-methyl-2-ketobutyrate (HMKB). In the reductase reaction, this 2-ketoacid undergoes a metal-dependent reduction by NADPH to yield (R)-2,3-dihydroxy-isovalerate. This Lachnoclostridium phytofermentans (strain ATCC 700394 / DSM 18823 / ISDg) (Clostridium phytofermentans) protein is Ketol-acid reductoisomerase (NADP(+)).